A 918-amino-acid chain; its full sequence is Isoleucine--tRNA ligase (918 aa).

The 'HIGH' region signature appears at 57 to 67; it reads PYANGHIHIGT. An L-isoleucyl-5'-AMP-binding site is contributed by glutamate 552. A 'KMSKS' region motif is present at residues 593–597; it reads KMSKS. Residue lysine 596 participates in ATP binding. Zn(2+)-binding residues include cysteine 886, cysteine 889, cysteine 906, and cysteine 909.

Belongs to the class-I aminoacyl-tRNA synthetase family. IleS type 1 subfamily. As to quaternary structure, monomer. It depends on Zn(2+) as a cofactor.

The protein localises to the cytoplasm. The enzyme catalyses tRNA(Ile) + L-isoleucine + ATP = L-isoleucyl-tRNA(Ile) + AMP + diphosphate. Functionally, catalyzes the attachment of isoleucine to tRNA(Ile). As IleRS can inadvertently accommodate and process structurally similar amino acids such as valine, to avoid such errors it has two additional distinct tRNA(Ile)-dependent editing activities. One activity is designated as 'pretransfer' editing and involves the hydrolysis of activated Val-AMP. The other activity is designated 'posttransfer' editing and involves deacylation of mischarged Val-tRNA(Ile). The protein is Isoleucine--tRNA ligase of Thermotoga neapolitana (strain ATCC 49049 / DSM 4359 / NBRC 107923 / NS-E).